The chain runs to 274 residues: Large ribosomal subunit protein uL2 (274 aa).

Positions 200–274 (HALEKSGKAG…SKYIIERRKK (75 aa)) are disordered. Composition is skewed to basic residues over residues 207-220 (KAGR…RPRN) and 255-274 (LKTR…RRKK).

The protein belongs to the universal ribosomal protein uL2 family. In terms of assembly, part of the 50S ribosomal subunit. Forms a bridge to the 30S subunit in the 70S ribosome.

Functionally, one of the primary rRNA binding proteins. Required for association of the 30S and 50S subunits to form the 70S ribosome, for tRNA binding and peptide bond formation. It has been suggested to have peptidyltransferase activity; this is somewhat controversial. Makes several contacts with the 16S rRNA in the 70S ribosome. The sequence is that of Large ribosomal subunit protein uL2 from Parabacteroides distasonis (strain ATCC 8503 / DSM 20701 / CIP 104284 / JCM 5825 / NCTC 11152).